A 347-amino-acid chain; its full sequence is MDLQQQLEELKQQTLEHLTSLTGDHSKELQDLKVSVLGKKGTLTELLKGLKDLSADMRPIIGKQVNQVRDVLNTAFEEQSRIVEEAKIQAKLESESIDVTLPGRQMKLGNRHILTQTSEEIEDIFLGMGFQIVDGFEVEKDYYNFERMNLPKDHPARDMQDTFYITEEILLRTHTSPVQARTLDQHDFSKGPLKMVSPGRVFRRDTDDATHSHQFHQIEGLVVGKNISMGDLKGTLEMIIKKMFGEERKIRLRPSYFPFTEPSVEVDVSCFKCGGKGCNVCKGTGWIEILGAGMVHPRVLEMSGVNSEEYSGFAFGLGQERIAMLRYGINDIRGFYQGDMRFSEQFK.

E261 provides a ligand contact to Mg(2+).

It belongs to the class-II aminoacyl-tRNA synthetase family. Phe-tRNA synthetase alpha subunit type 1 subfamily. Tetramer of two alpha and two beta subunits. The cofactor is Mg(2+).

The protein resides in the cytoplasm. It catalyses the reaction tRNA(Phe) + L-phenylalanine + ATP = L-phenylalanyl-tRNA(Phe) + AMP + diphosphate + H(+). This chain is Phenylalanine--tRNA ligase alpha subunit, found in Streptococcus uberis (strain ATCC BAA-854 / 0140J).